A 259-amino-acid polypeptide reads, in one-letter code: Small ribosomal subunit protein uS2 (259 aa).

It belongs to the universal ribosomal protein uS2 family.

This Fervidobacterium nodosum (strain ATCC 35602 / DSM 5306 / Rt17-B1) protein is Small ribosomal subunit protein uS2.